The following is a 522-amino-acid chain: MAKFVIAGQADCPYYAKVELLADSLQSKLQDFHVHKIVKTPEEWKPWLQQLCADNGWTHGRSPIIWRELVDRGGKGLLIGGHNDFMEYARSYYGMTSGMLSEMMKNIAAENLAVTQELREEEETIRRQSKPLHVCVINAARSPAYHVLPSLVNGKILREEEIALHLHDSEENLEKLKGLEMEVFDLSFPFLKEISVTTDLPTAFQNAHIAIVLDDFDQGGKEDAIGDMETKVSFYKRVAEAINQTASKDIRVLVAGTGPLNSLVSILIDHTPSIPRQNIAAVAQVKERQAKSLLAKRLTVNSAGVCDVIVWGNVGGTTYTDVSRARVHGYDGAIWGPPSYSCSVSEMVHDNKWLEGEFLEQLQSRSHTIQDSLQHSADLSMAAAISSTLSYWWNGSPEGQLFSLAVCSEGFYNIPEGVVFSFPVMFHKGSWEVVQDIDMNEDMRVMLSSITAQLVEEKDLLLHPTNANHEKLLKVFGVTTDISTPSSVKLDKIMEETEKSSSEDTPEAAAAAVSTGDETVPS.

The segment at 495-522 (EETEKSSSEDTPEAAAAAVSTGDETVPS) is disordered.

This sequence belongs to the LDH/MDH superfamily. MDH type 2 family.

This chain is Putative malate dehydrogenase 1B (MDH1B), found in Branchiostoma floridae (Florida lancelet).